The chain runs to 100 residues: HssA/B-like protein 37 (100 aa).

2 disordered regions span residues 1-29 (MTLFSSISSMSTSMSGSKSSIASFGSGTS) and 67-100 (RSRGSCGGNRGNGNGNGGMGGGNGSCCGGPCCGI). The span at 71-93 (SCGGNRGNGNGNGGMGGGNGSCC) shows a compositional bias: gly residues.

It belongs to the hssA/B family.

The protein is HssA/B-like protein 37 (hssl37) of Dictyostelium discoideum (Social amoeba).